The sequence spans 958 residues: Nuclear factor NF-kappa-B p100 subunit (958 aa).

The region spanning 40-230 (LLMSYLSIIE…DPIHDSKSPG (191 aa)) is the RHD domain. Positions 343–347 (RKRRK) match the Nuclear localization signal motif. Disordered stretches follow at residues 350-374 (PTFN…SFGQ) and 411-442 (CSAT…QTDS). A GRR region spans residues 352 to 390 (FNNHFYGGGSPMGGAPPGSSFGQGGGSNINYQYTGMNSA). Positions 357 to 374 (YGGGSPMGGAPPGSSFGQ) are enriched in gly residues. Residues 412-425 (SATNSSEKNQQPSI) are compositionally biased toward polar residues. 6 ANK repeats span residues 500–529 (NGDT…SIPN), 539–568 (LQQT…DPTI), 572–603 (YGNS…QKNL), 610–639 (HGLS…NVNS), 644–674 (SGKS…DINA), and 678–707 (GGNT…NVLS). Residues 705–766 (VLSENDEPVN…SAEEMHRREQ (62 aa)) form a disordered region. Residues 724-734 (SESDSDVQMDT) show a composition bias toward acidic residues. Positions 753 to 766 (ECEHSAEEMHRREQ) are enriched in basic and acidic residues. In terms of domain architecture, Death spans 815–901 (VNVLALETNT…EGVELLCKSE (87 aa)). The segment covering 904–916 (AKHHSPAESKNDS) has biased composition (basic and acidic residues). Residues 904–958 (AKHHSPAESKNDSAYESQSMEVDQSSGNLMDDSQKQTIPVSAAELCPTTEPTIGQ) are disordered. Polar residues predominate over residues 917–931 (AYESQSMEVDQSSGN).

As to quaternary structure, active NF-kappa-B is a heterodimer of an about 52 kDa DNA-binding subunit and the weak DNA-binding subunit p65. Two heterodimers might form a labile tetramer. While translation occurs, the particular unfolded structure after the GRR repeat promotes the generation of p52 making it an acceptable substrate for the proteasome. This process is known as cotranslational processing. The processed form is active and the unprocessed form acts as an inhibitor (I kappa B-like), being able to form cytosolic complexes with NF-kappa B, trapping it in the cytoplasm. Complete folding of the region downstream of the GRR repeat precludes processing. In terms of processing, constitutive processing is tightly suppressed by its C-terminal processing inhibitory domain, named PID, which contains the death domain. Expressed in spleen.

It is found in the nucleus. It localises to the cytoplasm. Appears to have dual functions such as cytoplasmic retention of attached NF-kappa-B proteins and generation of p52 by a cotranslational processing. The proteasome-mediated process ensures the production of both p52 and p100 and preserves their independent function. p52 binds to the kappa-B consensus sequence 5'-GGRNNYYCC-3', located in the enhancer region of genes involved in immune response and acute phase reactions. In concert with RELB, may play a role in the regulation of the circadian clock. The protein is Nuclear factor NF-kappa-B p100 subunit (nfkb2) of Xenopus laevis (African clawed frog).